Here is a 160-residue protein sequence, read N- to C-terminus: Eukaryotic translation initiation factor 5A (160 aa).

Over residues 1-12 the composition is skewed to basic and acidic residues; that stretch reads MSDEEHHFESKA. The tract at residues 1-21 is disordered; the sequence is MSDEEHHFESKADAGASKTFP. Hypusine is present on lysine 52.

Belongs to the eIF-5A family. In terms of processing, lys-53 undergoes hypusination, a unique post-translational modification that consists in the addition of a butylamino group from spermidine to lysine side chain, leading to the formation of the unusual amino acid hypusine. eIF-5As are the only known proteins to undergo this modification, which is essential for their function.

Translation factor that promotes translation elongation and termination, particularly upon ribosome stalling at specific amino acid sequence contexts. Binds between the exit (E) and peptidyl (P) site of the ribosome and promotes rescue of stalled ribosome: specifically required for efficient translation of polyproline-containing peptides as well as other motifs that stall the ribosome. Acts as a ribosome quality control (RQC) cofactor by joining the RQC complex to facilitate peptidyl transfer during CAT tailing step. This chain is Eukaryotic translation initiation factor 5A, found in Manihot esculenta (Cassava).